Here is a 505-residue protein sequence, read N- to C-terminus: Deoxyguanosinetriphosphate triphosphohydrolase (505 aa).

An HD domain is found at 66-273; the sequence is RLTHSMEVQQ…MEAADDISYC (208 aa).

Belongs to the dGTPase family. Type 1 subfamily. As to quaternary structure, homotetramer. It depends on Mg(2+) as a cofactor.

It carries out the reaction dGTP + H2O = 2'-deoxyguanosine + triphosphate + H(+). Its function is as follows. dGTPase preferentially hydrolyzes dGTP over the other canonical NTPs. This chain is Deoxyguanosinetriphosphate triphosphohydrolase, found in Salmonella schwarzengrund (strain CVM19633).